Reading from the N-terminus, the 134-residue chain is Small ribosomal subunit protein uS8c (134 aa).

It belongs to the universal ribosomal protein uS8 family. Part of the 30S ribosomal subunit.

It is found in the plastid. The protein resides in the chloroplast. One of the primary rRNA binding proteins, it binds directly to 16S rRNA central domain where it helps coordinate assembly of the platform of the 30S subunit. The protein is Small ribosomal subunit protein uS8c (rps8) of Vitis vinifera (Grape).